The following is a 539-amino-acid chain: G protein-coupled receptor associated sorting protein 3 (539 aa).

Positions 1–10 are enriched in basic residues; the sequence is MTGSKNKARA. 2 disordered regions span residues 1–111 and 132–170; these read MTGS…DSWF and NSVA…EEEE. 2 stretches are compositionally biased toward basic and acidic residues: residues 66–80 and 88–106; these read VVAE…ESKA and FNHK…DKPS. Positions 132 to 146 are enriched in polar residues; that stretch reads NSVAKCENKPSTSIQ.

It belongs to the GPRASP family. As to quaternary structure, homodimer.

It is found in the cytoplasm. The protein resides in the nucleus. Its function is as follows. Survival and differentiation promoting protein that plays a role in the regulation of neurosynaptogenesis. Induces phosphatase PP2A activity which results in APP dephosphorylation and inhibits BACE1-mediated processing of APP. The sequence is that of G protein-coupled receptor associated sorting protein 3 (Gprasp3) from Rattus norvegicus (Rat).